The sequence spans 395 residues: Renin (395 aa).

A signal peptide spans 1-21 (MLQSWEFVLLISCFLCFSSDA). Positions 22 to 43 (LQRISLKKMPSIRETLQEMGMK) are cleaved as a propeptide — activation peptide. The N-linked (GlcNAc...) asparagine glycan is linked to Asn64. The Peptidase A1 domain occupies 79–392 (YYGEISIGTP…DRQNNRIGFA (314 aa)). The active site involves Asp97. 2 disulfide bridges follow: Cys110–Cys117 and Cys274–Cys278. The active site involves Asp283. A disulfide bond links Cys316 and Cys351.

The protein belongs to the peptidase A1 family. Post-translationally, N-glycosylated. Expressed by the venom gland (at protein level).

The protein resides in the secreted. It carries out the reaction Cleavage of Leu-|-Xaa bond in angiotensinogen to generate angiotensin I.. With respect to regulation, inhibited completely by aspartyl protease inhibitor pepstatin A, but not by the serine- or metalloproteinase inhibitors PMSF or EDTA. In terms of biological role, renin is a highly specific endopeptidase, whose only known function is to generate angiotensin I from angiotensinogen in the plasma, initiating a cascade of reactions that produce an elevation of blood pressure and increased sodium retention by the kidney. This protein is also found in snake venom and shown to specifically cleave human and porcine angiotensinogen into angiotensin I. It does not have general protease activity, no cleavage of alpha or beta casein. May be directly responsible for elevation of blood pressure in the victims of envenomation. The sequence is that of Renin from Echis ocellatus (Ocellated saw-scaled viper).